The primary structure comprises 287 residues: Probable ribosomal RNA small subunit methyltransferase A (287 aa).

The S-adenosyl-L-methionine site is built by histidine 29, leucine 31, glycine 56, glutamate 77, aspartate 102, and asparagine 117.

Belongs to the class I-like SAM-binding methyltransferase superfamily. rRNA adenine N(6)-methyltransferase family. RsmA subfamily.

The protein localises to the cytoplasm. Specifically dimethylates two adjacent adenosines in the loop of a conserved hairpin near the 3'-end of 16S rRNA in the 30S particle. May play a critical role in biogenesis of 30S subunits. The chain is Probable ribosomal RNA small subunit methyltransferase A from Methanosarcina barkeri (strain Fusaro / DSM 804).